The sequence spans 443 residues: Type I restriction enzyme HindI methylase subunit (443 aa).

Residues 117–122, 146–148, and glutamate 173 contribute to the S-adenosyl-L-methionine site; these read QYFTPK and SGG.

This sequence belongs to the N(4)/N(6)-methyltransferase family. In terms of assembly, the type I restriction/modification system is composed of three polypeptides R, M and S; the restriction enzyme has stoichiometry R(2)M(2)S(1) while the methyltransferase is M(2)S(1).

The enzyme catalyses a 2'-deoxyadenosine in DNA + S-adenosyl-L-methionine = an N(6)-methyl-2'-deoxyadenosine in DNA + S-adenosyl-L-homocysteine + H(+). Functionally, the subtype gamma methyltransferase (M) subunit of a type I restriction enzyme. The M and S subunits together form a methyltransferase (MTase) that methylates adenosines in the sequence 5'-RAACN(5)TAG-3'. Methylation protects against cleavage by HindI. In the presence of the R subunit the complex can also act as an endonuclease, binding to the same target sequence but cutting the DNA some distance from this site. Whether the DNA is cut or modified depends on the methylation state of the target sequence. When the target site is unmodified, the DNA is cut. When the target site is hemimethylated, the complex acts as a maintenance MTase modifying the DNA so that both strands become methylated. After locating a non-methylated recognition site, the enzyme complex serves as a molecular motor that translocates DNA in an ATP-dependent manner until a collision occurs that triggers cleavage. The polypeptide is Type I restriction enzyme HindI methylase subunit (Haemophilus influenzae (strain ATCC 51907 / DSM 11121 / KW20 / Rd)).